We begin with the raw amino-acid sequence, 69 residues long: Dodecin (69 aa).

Position 3 to 5 (3 to 5) interacts with FMN; that stretch reads KVY. Residues K6, R28, and 32–34 contribute to the CoA site; that span reads TLR. 5 residues coordinate FMN: D37, W38, R45, Q57, and R65. Residue 65–67 coordinates CoA; sequence RLE.

Belongs to the dodecin family. In terms of assembly, homododecamer; four homotrimers assemble to form a dodecameric hollow sphere with an outer diameter of about 60 Angstroms. Flavin dimers are bound between subunits with a stoichiometry of 6 flavin dimers per dodecamer. Besides, trimeric coenzyme A molecules can be bound between subunits. A dodecamer can bind simultaneously 12 flavin and 12 coenzyme A molecules.

May function as storage protein that sequesters various flavins and other cofactors, thereby protecting the cell against undesirable reactions mediated by the free cofactors. Binds and sequesters FMN, FAD, lumiflavin and lumichrome, and can also bind coenzyme A. This is Dodecin from Thermus thermophilus (strain ATCC 27634 / DSM 579 / HB8).